The primary structure comprises 475 residues: Exodeoxyribonuclease 7 large subunit (475 aa).

It belongs to the XseA family. As to quaternary structure, heterooligomer composed of large and small subunits.

It is found in the cytoplasm. It catalyses the reaction Exonucleolytic cleavage in either 5'- to 3'- or 3'- to 5'-direction to yield nucleoside 5'-phosphates.. Bidirectionally degrades single-stranded DNA into large acid-insoluble oligonucleotides, which are then degraded further into small acid-soluble oligonucleotides. The chain is Exodeoxyribonuclease 7 large subunit from Bartonella henselae (strain ATCC 49882 / DSM 28221 / CCUG 30454 / Houston 1) (Rochalimaea henselae).